Consider the following 423-residue polypeptide: Steroid hormone receptor ERR1 (423 aa).

A disordered region spans residues 1 to 67; sequence MSSQVVGIEP…GAGPGEQGGG (67 aa). The interval 1-76 is repressor domain; sequence MSSQVVGIEP…GKLVLSSLPK (76 aa). Lys-14 is covalently cross-linked (Glycyl lysine isopeptide (Lys-Gly) (interchain with G-Cter in SUMO)). Residues Ser-19 and Ser-22 each carry the phosphoserine modification. Gly residues predominate over residues 58–67; sequence GAGPGEQGGG. The segment at residues 76–151 is a DNA-binding region (nuclear receptor); that stretch reads KRLCLVCGDV…VGMLKEGVRL (76 aa). 2 consecutive NR C4-type zinc fingers follow at residues 79–99 and 115–134; these read CLVCGDVASGYHYGVASCEAC and CPASNECEITKRRRKACQAC. An N6-acetyllysine; by PCAF/KAT2B mark is found at Lys-129, Lys-138, Lys-160, and Lys-162. Residue Lys-189 forms a Glycyl lysine isopeptide (Lys-Gly) (interchain with G-Cter in SUMO2) linkage. The region spanning 193 to 421 is the NR LBD domain; it reads PVNALVSHLL…KLFLEMLEAM (229 aa). Residue Lys-403 forms a Glycyl lysine isopeptide (Lys-Gly) (interchain with G-Cter in SUMO); alternate linkage. Lys-403 participates in a covalent cross-link: Glycyl lysine isopeptide (Lys-Gly) (interchain with G-Cter in SUMO2); alternate. The AF-2 domain stretch occupies residues 403 to 423; the sequence is KLEGKVPMHKLFLEMLEAMMD.

Belongs to the nuclear hormone receptor family. NR3 subfamily. As to quaternary structure, binds DNA as a monomer or a homodimer. Interacts (via the AF2 domain) with coactivator PPARGC1A (via the L3 motif); the interaction greatly enhances transcriptional activity of genes involved in energy metabolism. Interacts with PIAS4; the interaction enhances sumoylation. Interacts with MAPK15; promotes re-localization of ESRRA to the cytoplasm through a XPO1-dependent mechanism then inhibits ESRRA transcriptional activity. In terms of processing, phosphorylation on Ser-19 enhances sumoylation on Lys-14 increasing repression of transcriptional activity. Sumoylated with SUMO2. Main site is Lys-14 which is enhanced by phosphorylation on Ser-19, cofactor activation, and by interaction with PIAS4. Sumoylation enhances repression of transcriptional activity, but has no effect on subcellular location nor on DNA binding. Post-translationally, reversibly acetylated. Acetylation by PCAF/KAT2 at Lys-129, Lys-138, Lys-160 and Lys-162 and PCAF/KAT2 decreases transcriptional activity probably by inhibiting DNA-binding activity; deacetylation involves SIRT1 and HDAC8 and increases DNA-binding.

It localises to the nucleus. Its subcellular location is the cytoplasm. In terms of biological role, binds to an ERR-alpha response element (ERRE) containing a single consensus half-site, 5'-TNAAGGTCA-3'. Can bind to the medium-chain acyl coenzyme A dehydrogenase (MCAD) response element NRRE-1 and may act as an important regulator of MCAD promoter. Binds to the C1 region of the lactoferrin gene promoter. Requires dimerization and the coactivator, PGC-1A, for full activity. The ERRalpha/PGC1alpha complex is a regulator of energy metabolism. Induces the expression of PERM1 in the skeletal muscle. In Homo sapiens (Human), this protein is Steroid hormone receptor ERR1 (ESRRA).